Reading from the N-terminus, the 209-residue chain is Protease (209 aa).

Active-site residues include His55, Asp72, and Cys123.

It belongs to the peptidase C5 family. Interacts with protease cofactor pVI-C; this interaction is necessary for protease activation.

It localises to the virion. Its subcellular location is the host nucleus. The enzyme catalyses Cleaves proteins of the adenovirus and its host cell at two consensus sites: -Yaa-Xaa-Gly-Gly-|-Xaa- and -Yaa-Xaa-Gly-Xaa-|-Gly- (in which Yaa is Met, Ile or Leu, and Xaa is any amino acid).. Its activity is regulated as follows. Requires DNA and protease cofactor for maximal activation. Inside nascent virions, becomes partially activated by binding to the viral DNA, allowing it to cleave the cofactor that binds to the protease and fully activates it. Actin, like the viral protease cofactor, seems to act as a cofactor in the cleavage of cytokeratin 18 and of actin itself. Cleaves viral precursor proteins (pTP, pIIIa, pVI, pVII, pVIII, and pX) inside newly assembled particles giving rise to mature virions. Protease complexed to its cofactor slides along the viral DNA to specifically locate and cleave the viral precursors. Mature virions have a weakened organization compared to the unmature virions, thereby facilitating subsequent uncoating. Without maturation, the particle lacks infectivity and is unable to uncoat. Late in adenovirus infection, in the cytoplasm, may participate in the cytoskeleton destruction. Cleaves host cell cytoskeletal keratins K7 and K18. The polypeptide is Protease (Human adenovirus D serotype 9 (HAdV-9)).